The sequence spans 298 residues: Lipoyl synthase (298 aa).

Residues C40, C45, C51, C67, C71, C74, and S280 each coordinate [4Fe-4S] cluster. The Radical SAM core domain occupies 53–269 (AVRKTATFMI…KEIALSKGFS (217 aa)).

This sequence belongs to the radical SAM superfamily. Lipoyl synthase family. The cofactor is [4Fe-4S] cluster.

Its subcellular location is the cytoplasm. The catalysed reaction is [[Fe-S] cluster scaffold protein carrying a second [4Fe-4S](2+) cluster] + N(6)-octanoyl-L-lysyl-[protein] + 2 oxidized [2Fe-2S]-[ferredoxin] + 2 S-adenosyl-L-methionine + 4 H(+) = [[Fe-S] cluster scaffold protein] + N(6)-[(R)-dihydrolipoyl]-L-lysyl-[protein] + 4 Fe(3+) + 2 hydrogen sulfide + 2 5'-deoxyadenosine + 2 L-methionine + 2 reduced [2Fe-2S]-[ferredoxin]. It functions in the pathway protein modification; protein lipoylation via endogenous pathway; protein N(6)-(lipoyl)lysine from octanoyl-[acyl-carrier-protein]. Functionally, catalyzes the radical-mediated insertion of two sulfur atoms into the C-6 and C-8 positions of the octanoyl moiety bound to the lipoyl domains of lipoate-dependent enzymes, thereby converting the octanoylated domains into lipoylated derivatives. The polypeptide is Lipoyl synthase (Bacillus cytotoxicus (strain DSM 22905 / CIP 110041 / 391-98 / NVH 391-98)).